Consider the following 554-residue polypeptide: 3-(3-hydroxy-phenyl)propionate/3-hydroxycinnamic acid hydroxylase (554 aa).

Residues 17–46 (QVAI…VVEK) and 285–295 (FRIDRVLLAGD) each bind FAD.

It belongs to the PheA/TfdB FAD monooxygenase family. FAD is required as a cofactor.

It catalyses the reaction 3-(3-hydroxyphenyl)propanoate + NADH + O2 + H(+) = 3-(2,3-dihydroxyphenyl)propanoate + NAD(+) + H2O. The enzyme catalyses (2E)-3-(3-hydroxyphenyl)prop-2-enoate + NADH + O2 + H(+) = (2E)-3-(2,3-dihydroxyphenyl)prop-2-enoate + NAD(+) + H2O. Its pathway is aromatic compound metabolism; 3-phenylpropanoate degradation. Catalyzes the insertion of one atom of molecular oxygen into position 2 of the phenyl ring of 3-(3-hydroxyphenyl)propionate (3-HPP) and hydroxycinnamic acid (3HCI). This is 3-(3-hydroxy-phenyl)propionate/3-hydroxycinnamic acid hydroxylase from Escherichia coli (strain 55989 / EAEC).